Here is a 354-residue protein sequence, read N- to C-terminus: Photosystem II protein D1 3 (354 aa).

3 helical membrane-spanning segments follow: residues tyrosine 29–threonine 46, histidine 118–leucine 133, and tryptophan 142–alanine 156. Histidine 118 contributes to the chlorophyll a binding site. Tyrosine 126 contributes to the pheophytin a binding site. Residues aspartate 170 and glutamate 189 each contribute to the [CaMn4O5] cluster site. A helical transmembrane segment spans residues phenylalanine 197–leucine 218. Histidine 198 provides a ligand contact to chlorophyll a. A quinone-binding positions include histidine 215 and serine 264–phenylalanine 265. Histidine 215 contributes to the Fe cation binding site. Histidine 272 serves as a coordination point for Fe cation. Residues phenylalanine 274 to leucine 288 traverse the membrane as a helical segment. [CaMn4O5] cluster-binding residues include histidine 332, glutamate 333, aspartate 342, and alanine 344. Positions alanine 345–glycine 354 are excised as a propeptide.

The protein belongs to the reaction center PufL/M/PsbA/D family. As to quaternary structure, PSII is composed of 1 copy each of membrane proteins PsbA, PsbB, PsbC, PsbD, PsbE, PsbF, PsbH, PsbI, PsbJ, PsbK, PsbL, PsbM, PsbT, PsbX, PsbY, PsbZ, Psb30/Ycf12, peripheral proteins PsbO, CyanoQ (PsbQ), PsbU, PsbV and a large number of cofactors. It forms dimeric complexes. The D1/D2 heterodimer binds P680, chlorophylls that are the primary electron donor of PSII, and subsequent electron acceptors. It shares a non-heme iron and each subunit binds pheophytin, quinone, additional chlorophylls, carotenoids and lipids. D1 provides most of the ligands for the Mn4-Ca-O5 cluster of the oxygen-evolving complex (OEC). There is also a Cl(-1) ion associated with D1 and D2, which is required for oxygen evolution. The PSII complex binds additional chlorophylls, carotenoids and specific lipids. is required as a cofactor. In terms of processing, tyr-161 forms a radical intermediate that is referred to as redox-active TyrZ, YZ or Y-Z. Post-translationally, C-terminally processed by CtpA; processing is essential to allow assembly of the oxygen-evolving complex and thus photosynthetic growth.

The protein localises to the cellular thylakoid membrane. The catalysed reaction is 2 a plastoquinone + 4 hnu + 2 H2O = 2 a plastoquinol + O2. Photosystem II (PSII) is a light-driven water:plastoquinone oxidoreductase that uses light energy to abstract electrons from H(2)O, generating O(2) and a proton gradient subsequently used for ATP formation. It consists of a core antenna complex that captures photons, and an electron transfer chain that converts photonic excitation into a charge separation. The D1/D2 (PsbA/PsbD) reaction center heterodimer binds P680, the primary electron donor of PSII as well as several subsequent electron acceptors. This Synechococcus sp. (strain JA-3-3Ab) (Cyanobacteria bacterium Yellowstone A-Prime) protein is Photosystem II protein D1 3.